The primary structure comprises 435 residues: Xylose isomerase (435 aa).

Active-site residues include H100 and D103. E231, E267, H270, D295, D306, D308, and D338 together coordinate Mg(2+).

This sequence belongs to the xylose isomerase family. In terms of assembly, homotetramer. It depends on Mg(2+) as a cofactor.

The protein localises to the cytoplasm. It carries out the reaction alpha-D-xylose = alpha-D-xylulofuranose. The polypeptide is Xylose isomerase (Brucella ovis (strain ATCC 25840 / 63/290 / NCTC 10512)).